The primary structure comprises 94 residues: Large ribosomal subunit protein bL25 (94 aa).

It belongs to the bacterial ribosomal protein bL25 family. Part of the 50S ribosomal subunit; part of the 5S rRNA/L5/L18/L25 subcomplex. Contacts the 5S rRNA. Binds to the 5S rRNA independently of L5 and L18.

This is one of the proteins that binds to the 5S RNA in the ribosome where it forms part of the central protuberance. The polypeptide is Large ribosomal subunit protein bL25 (Escherichia coli (strain K12 / DH10B)).